The following is a 321-amino-acid chain: Necdin (321 aa).

Residues 1 to 96 are disordered; sequence MSEQSKDLSD…QPGPAPPAPA (96 aa). Over residues 20 to 35 the composition is skewed to low complexity; sequence SEVHSSPGVSEGVPPS. Positions 98 to 297 constitute an MAGE domain; the sequence is LVQKAHELMW…QAWPSRYREA (200 aa).

In terms of assembly, binds to the transactivation domains of E2F1 and p53. Binds also SV40 large T antigen and adenovirus E1A. Interacts with nucleobindin 1 and 2. In terms of tissue distribution, almost ubiquitous. Detected in fetal brain, lung, liver and kidney; in adult heart, brain, placenta, lung, liver, skeletal muscle, kidney, pancreas, spleen, thymus, prostate, testis, ovary, small intestine and colon. Not detected in peripheral blood leukocytes. In brain, restricted to post-mitotic neurons.

It localises to the perikaryon. It is found in the nucleus. Its function is as follows. Growth suppressor that facilitates the entry of the cell into cell cycle arrest. Functionally similar to the retinoblastoma protein it binds to and represses the activity of cell-cycle-promoting proteins such as SV40 large T antigen, adenovirus E1A, and the transcription factor E2F. Necdin also interacts with p53 and works in an additive manner to inhibit cell growth. Also functions as a transcription factor and directly binds to specific guanosine-rich DNA sequences. The polypeptide is Necdin (NDN) (Homo sapiens (Human)).